We begin with the raw amino-acid sequence, 250 residues long: uncharacterized protein (250 aa).

A divalent metal cation is bound by residues E97, E99, and D128.

Belongs to the FAH family.

This is an uncharacterized protein from Archaeoglobus fulgidus (strain ATCC 49558 / DSM 4304 / JCM 9628 / NBRC 100126 / VC-16).